The chain runs to 313 residues: Putative stilbene synthase 2 (313 aa).

Cys-88 is an active-site residue. Substrate-binding positions include Leu-191 and 229-231 (GGP).

It belongs to the thiolase-like superfamily. Chalcone/stilbene synthases family. In terms of assembly, homodimer.

It is found in the cytoplasm. It catalyses the reaction 4-coumaroyl-CoA + 3 malonyl-CoA + 3 H(+) = trans-resveratrol + 4 CO2 + 4 CoA. The protein operates within phytoalexin biosynthesis; 3,4',5-trihydroxystilbene biosynthesis; 3,4',5-trihydroxystilbene from trans-4-coumarate: step 2/2. This Arachis hypogaea (Peanut) protein is Putative stilbene synthase 2.